Reading from the N-terminus, the 469-residue chain is GTPase Der (469 aa).

EngA-type G domains lie at 3 to 166 (PVIA…PEDE) and 177 to 350 (LRLA…ESAN). Residues 9–16 (GRPNVGKS), 56–60 (DTGGI), 118–121 (NKVD), 183–190 (GRPNVGKS), 230–234 (DTAGV), and 295–298 (NKWD) each bind GTP. A KH-like domain is found at 351-435 (LKVSPAKLTQ…PVKIEFKTSE (85 aa)).

This sequence belongs to the TRAFAC class TrmE-Era-EngA-EngB-Septin-like GTPase superfamily. EngA (Der) GTPase family. As to quaternary structure, associates with the 50S ribosomal subunit.

Its function is as follows. GTPase that plays an essential role in the late steps of ribosome biogenesis. The protein is GTPase Der of Acinetobacter baumannii (strain SDF).